Reading from the N-terminus, the 702-residue chain is Elongation factor G 1 (702 aa).

One can recognise a tr-type G domain in the interval 8 to 290 (ERYRNIGISA…AVIDFLPSPV (283 aa)). GTP contacts are provided by residues 17 to 24 (AHIDAGKT), 88 to 92 (DTPGH), and 142 to 145 (NKMD).

This sequence belongs to the TRAFAC class translation factor GTPase superfamily. Classic translation factor GTPase family. EF-G/EF-2 subfamily.

It is found in the cytoplasm. Its function is as follows. Catalyzes the GTP-dependent ribosomal translocation step during translation elongation. During this step, the ribosome changes from the pre-translocational (PRE) to the post-translocational (POST) state as the newly formed A-site-bound peptidyl-tRNA and P-site-bound deacylated tRNA move to the P and E sites, respectively. Catalyzes the coordinated movement of the two tRNA molecules, the mRNA and conformational changes in the ribosome. The sequence is that of Elongation factor G 1 from Cupriavidus pinatubonensis (strain JMP 134 / LMG 1197) (Cupriavidus necator (strain JMP 134)).